A 321-amino-acid chain; its full sequence is Ubiquinone biosynthesis O-methyltransferase, mitochondrial (321 aa).

Arg-102, Gly-135, Asp-157, and Leu-210 together coordinate S-adenosyl-L-methionine. Positions 211, 214, and 215 each coordinate Mg(2+).

Belongs to the class I-like SAM-binding methyltransferase superfamily. UbiG/COQ3 family. As to quaternary structure, component of a multi-subunit COQ enzyme complex. The cofactor is Mg(2+).

The protein localises to the mitochondrion inner membrane. It carries out the reaction a 3,4-dihydroxy-5-(all-trans-polyprenyl)benzoate + S-adenosyl-L-methionine = a 4-hydroxy-3-methoxy-5-(all-trans-polyprenyl)benzoate + S-adenosyl-L-homocysteine + H(+). The catalysed reaction is a 3-demethylubiquinone + S-adenosyl-L-methionine = a ubiquinone + S-adenosyl-L-homocysteine. The enzyme catalyses a 3-demethylubiquinol + S-adenosyl-L-methionine = a ubiquinol + S-adenosyl-L-homocysteine + H(+). It participates in cofactor biosynthesis; ubiquinone biosynthesis. Functionally, O-methyltransferase required for two non-consecutive steps during ubiquinone biosynthesis. Catalyzes the 2 O-methylation of 3,4-dihydroxy-5-(all-trans-polyprenyl)benzoic acid into 4-hydroxy-3-methoxy-5-(all-trans-polyprenyl)benzoic acid. Also catalyzes the last step of ubiquinone biosynthesis by mediating methylation of 3-demethylubiquinone into ubiquinone. Also able to mediate the methylation of 3-demethylubiquinol into ubiquinol. The protein is Ubiquinone biosynthesis O-methyltransferase, mitochondrial of Dictyostelium discoideum (Social amoeba).